The sequence spans 444 residues: Chromosome partition protein MukF (444 aa).

A leucine-zipper region spans residues 212 to 240 (LDETSGNLRELQDTLNAAGDKLQAQLLRI).

It belongs to the MukF family. Interacts, and probably forms a ternary complex, with MukE and MukB via its C-terminal region. The complex formation is stimulated by calcium or magnesium. It is required for an interaction between MukE and MukB.

The protein localises to the cytoplasm. Its subcellular location is the nucleoid. Functionally, involved in chromosome condensation, segregation and cell cycle progression. May participate in facilitating chromosome segregation by condensation DNA from both sides of a centrally located replisome during cell division. Not required for mini-F plasmid partitioning. Probably acts via its interaction with MukB and MukE. Overexpression results in anucleate cells. It has a calcium binding activity. In Haemophilus influenzae (strain PittEE), this protein is Chromosome partition protein MukF.